A 341-amino-acid chain; its full sequence is Probable long-chain-alcohol O-fatty-acyltransferase 1 (341 aa).

8 helical membrane passes run asparagine 7–serine 27, leucine 36–valine 56, phenylalanine 58–alanine 78, proline 120–tyrosine 140, phenylalanine 149–phenylalanine 169, methionine 233–phenylalanine 253, threonine 261–valine 281, and alanine 293–alanine 313.

This sequence belongs to the wax synthase family.

Its subcellular location is the membrane. The enzyme catalyses a long chain fatty alcohol + a fatty acyl-CoA = a wax ester + CoA. Its function is as follows. Catalyzes the final step in the synthesis of long-chain linear esters (waxes). In Arabidopsis thaliana (Mouse-ear cress), this protein is Probable long-chain-alcohol O-fatty-acyltransferase 1 (AT1).